The sequence spans 338 residues: Glycerol-3-phosphate dehydrogenase [NAD(P)+] (338 aa).

S12, W13, R33, and K110 together coordinate NADPH. 3 residues coordinate sn-glycerol 3-phosphate: K110, G141, and S143. A145 serves as a coordination point for NADPH. K196, D249, S259, R260, and N261 together coordinate sn-glycerol 3-phosphate. K196 functions as the Proton acceptor in the catalytic mechanism. Residue R260 participates in NADPH binding. NADPH contacts are provided by V284 and E286.

Belongs to the NAD-dependent glycerol-3-phosphate dehydrogenase family.

It is found in the cytoplasm. The catalysed reaction is sn-glycerol 3-phosphate + NAD(+) = dihydroxyacetone phosphate + NADH + H(+). It catalyses the reaction sn-glycerol 3-phosphate + NADP(+) = dihydroxyacetone phosphate + NADPH + H(+). It functions in the pathway membrane lipid metabolism; glycerophospholipid metabolism. In terms of biological role, catalyzes the reduction of the glycolytic intermediate dihydroxyacetone phosphate (DHAP) to sn-glycerol 3-phosphate (G3P), the key precursor for phospholipid synthesis. This is Glycerol-3-phosphate dehydrogenase [NAD(P)+] from Limosilactobacillus reuteri (strain DSM 20016) (Lactobacillus reuteri).